A 347-amino-acid chain; its full sequence is MRIEQDLKLGFKDVLIRPKRSTLKSRSQVDLNRQFTFKHSGKTWSGVPIIAANMDSVASFEMAASLAQHNVMTAVHKHYSVEQWGEFVASQTAEVLQHVMVSSGTSDTDFIKLSEILAKSEDLNFICIDIANGYSEHLVDYVRKVRQAHPQAVISAGNVVTGDMVEELIIAGADIVKVGIGPGSVCTTRVKTGVGYPQLSAIIECADAAHGLGGQIIGDGGCSCAGDVAKAFGGGADFVMLGGMLAGHEQSGGEVVEQDGKMMVKFYGMSSQSAMDKHSGGVAKYRAAEGKTVLLPFKGSVDNTINDIMGGVRSTCTYVGAASLKELTKRTTFIRVQEQENNVYGKE.

Residue 108 to 131 (TDFIKLSEILAKSEDLNFICIDIA) coordinates NADP(+). Positions 181 and 183 each coordinate K(+). C186 (thioimidate intermediate) is an active-site residue. 216–239 (IIGDGGCSCAGDVAKAFGGGADFV) provides a ligand contact to NADP(+).

The protein belongs to the IMPDH/GMPR family. GuaC type 1 subfamily. Homotetramer.

The catalysed reaction is IMP + NH4(+) + NADP(+) = GMP + NADPH + 2 H(+). Functionally, catalyzes the irreversible NADPH-dependent deamination of GMP to IMP. It functions in the conversion of nucleobase, nucleoside and nucleotide derivatives of G to A nucleotides, and in maintaining the intracellular balance of A and G nucleotides. This is GMP reductase from Shewanella pealeana (strain ATCC 700345 / ANG-SQ1).